The primary structure comprises 180 residues: ATP-dependent protease subunit HslV (180 aa).

Threonine 5 is an active-site residue. Na(+) is bound by residues glycine 165, cysteine 168, and threonine 171.

This sequence belongs to the peptidase T1B family. HslV subfamily. In terms of assembly, a double ring-shaped homohexamer of HslV is capped on each side by a ring-shaped HslU homohexamer. The assembly of the HslU/HslV complex is dependent on binding of ATP.

It is found in the cytoplasm. It catalyses the reaction ATP-dependent cleavage of peptide bonds with broad specificity.. Its activity is regulated as follows. Allosterically activated by HslU binding. In terms of biological role, protease subunit of a proteasome-like degradation complex believed to be a general protein degrading machinery. This Helicobacter pylori (strain HPAG1) protein is ATP-dependent protease subunit HslV.